A 92-amino-acid chain; its full sequence is Small ribosomal subunit protein uS19 (92 aa).

Belongs to the universal ribosomal protein uS19 family.

Its function is as follows. Protein S19 forms a complex with S13 that binds strongly to the 16S ribosomal RNA. This chain is Small ribosomal subunit protein uS19, found in Leuconostoc mesenteroides subsp. mesenteroides (strain ATCC 8293 / DSM 20343 / BCRC 11652 / CCM 1803 / JCM 6124 / NCDO 523 / NBRC 100496 / NCIMB 8023 / NCTC 12954 / NRRL B-1118 / 37Y).